The chain runs to 284 residues: MLIIETLPLLRQHIRRLRQEGKRVALVPTMGNLHDGHMKLVDEAKARADVVIVSIFVNPMQFDRPDDLVRYPRTLQEDCEKLNKRKVDYVFAPAVEEIYPQGLEGQTYVDVPGLSTMLEGASRPGHFRGVSTIVSKLFNLIQPDIACFGEKDFQQLALIRKMVADMSYDIEIVGVPIIRAKDGLALSSRNAYLTAEQRKIAPGLYNVMNSIAEKLIAGNRELQEIIAIAEQELNEKGFRADDIQIRDADTLLELTETSKRAVILAAAWLGQARLIDNQSVTLAQ.

M30–H37 contributes to the ATP binding site. H37 acts as the Proton donor in catalysis. Q61 serves as a coordination point for (R)-pantoate. Q61 is a binding site for beta-alanine. Residue G149–D152 participates in ATP binding. Position 155 (Q155) interacts with (R)-pantoate. Residues I178 and L186–R189 contribute to the ATP site.

This sequence belongs to the pantothenate synthetase family. As to quaternary structure, homodimer.

The protein localises to the cytoplasm. The catalysed reaction is (R)-pantoate + beta-alanine + ATP = (R)-pantothenate + AMP + diphosphate + H(+). It participates in cofactor biosynthesis; (R)-pantothenate biosynthesis; (R)-pantothenate from (R)-pantoate and beta-alanine: step 1/1. Functionally, catalyzes the condensation of pantoate with beta-alanine in an ATP-dependent reaction via a pantoyl-adenylate intermediate. This is Pantothenate synthetase from Salmonella paratyphi A (strain ATCC 9150 / SARB42).